A 121-amino-acid polypeptide reads, in one-letter code: Small ribosomal subunit protein uS13 (121 aa).

The disordered stretch occupies residues 93–121 (RKGLPVRGQKTKTNARTRKGKRKTVGAKS).

The protein belongs to the universal ribosomal protein uS13 family. In terms of assembly, part of the 30S ribosomal subunit. Forms a loose heterodimer with protein S19. Forms two bridges to the 50S subunit in the 70S ribosome.

Its function is as follows. Located at the top of the head of the 30S subunit, it contacts several helices of the 16S rRNA. In the 70S ribosome it contacts the 23S rRNA (bridge B1a) and protein L5 of the 50S subunit (bridge B1b), connecting the 2 subunits; these bridges are implicated in subunit movement. Contacts the tRNAs in the A and P-sites. This Campylobacter lari (strain RM2100 / D67 / ATCC BAA-1060) protein is Small ribosomal subunit protein uS13.